Consider the following 342-residue polypeptide: Cyclin-D3-1 (342 aa).

The span at 322–334 (VGSPATNYESSAS) shows a compositional bias: polar residues. Positions 322–342 (VGSPATNYESSASSKRRRICR) are disordered.

The protein belongs to the cyclin family. Cyclin D subfamily.

This chain is Cyclin-D3-1 (CYCD3-1), found in Oryza sativa subsp. japonica (Rice).